The sequence spans 80 residues: Defensin-like protein 51 (80 aa).

The first 27 residues, 1-27 (MGFTKILVTFFLVGLLVISSSPQNAIA), serve as a signal peptide directing secretion. 4 cysteine pairs are disulfide-bonded: C39/C79, C43/C66, C52/C77, and C56/C78.

It belongs to the DEFL family.

The protein resides in the secreted. This chain is Defensin-like protein 51 (LCR48), found in Arabidopsis thaliana (Mouse-ear cress).